The sequence spans 336 residues: MGITIENVSKSFGSFQAVKQVDLDIASGSLVALLGPSGSGKSTLLRLIAGLEMPDTGRILLTGKDATYQSVQERNIGFVFQHYALFKHMTVRQNIAFGLELRKVPRAKINARVAELLELVQLTGLGDRYPSQLSGGQRQRVALARALAVEPKVLLLDEPFGALDAKVRKELRAWLRRLHDDVHVTTVFVTHDQEEAMEVADQIVVMNKGQVEQVGTPAEIYDHPASPFVMSFIGPVNVLRSRVFQQSEGTAAHCDIFLRPRDIIIETRPNGNTVSARIHRIIHLGWEIQVELRLDDGQELMAHLSRERFDELHLEPQQQVFIKPREAKSFPLYYSI.

An ABC transporter domain is found at 3–233; it reads ITIENVSKSF…PASPFVMSFI (231 aa). 35-42 serves as a coordination point for ATP; that stretch reads GPSGSGKS.

It belongs to the ABC transporter superfamily. Sulfate/tungstate importer (TC 3.A.1.6) family. In terms of assembly, the complex is composed of two ATP-binding proteins (CysA), two transmembrane proteins (CysT and CysW) and a solute-binding protein (CysP).

It localises to the cell inner membrane. It carries out the reaction sulfate(out) + ATP + H2O = sulfate(in) + ADP + phosphate + H(+). The enzyme catalyses thiosulfate(out) + ATP + H2O = thiosulfate(in) + ADP + phosphate + H(+). In terms of biological role, part of the ABC transporter complex CysAWTP involved in sulfate/thiosulfate import. Responsible for energy coupling to the transport system. The protein is Sulfate/thiosulfate import ATP-binding protein CysA of Thermosynechococcus vestitus (strain NIES-2133 / IAM M-273 / BP-1).